The sequence spans 353 residues: Quinolinate synthase (353 aa).

Positions 47 and 68 each coordinate iminosuccinate. C113 is a [4Fe-4S] cluster binding site. Residues 139 to 141 (YAN) and S156 contribute to the iminosuccinate site. C200 provides a ligand contact to [4Fe-4S] cluster. Residues 226 to 228 (HPE) and T243 each bind iminosuccinate. C297 serves as a coordination point for [4Fe-4S] cluster.

This sequence belongs to the quinolinate synthase family. Type 1 subfamily. [4Fe-4S] cluster is required as a cofactor.

The protein localises to the cytoplasm. It carries out the reaction iminosuccinate + dihydroxyacetone phosphate = quinolinate + phosphate + 2 H2O + H(+). The protein operates within cofactor biosynthesis; NAD(+) biosynthesis; quinolinate from iminoaspartate: step 1/1. Catalyzes the condensation of iminoaspartate with dihydroxyacetone phosphate to form quinolinate. The chain is Quinolinate synthase from Vibrio parahaemolyticus serotype O3:K6 (strain RIMD 2210633).